We begin with the raw amino-acid sequence, 334 residues long: Malate dehydrogenase 2 (334 aa).

Residue 12–18 (GAAGRVA) participates in NAD(+) binding. Arginine 93 and arginine 99 together coordinate substrate. NAD(+) is bound by residues asparagine 106, glutamine 113, and 130–132 (VGN). Residues asparagine 132 and arginine 166 each contribute to the substrate site. The active-site Proton acceptor is histidine 191.

This sequence belongs to the LDH/MDH superfamily. MDH type 2 family.

The catalysed reaction is (S)-malate + NAD(+) = oxaloacetate + NADH + H(+). Functionally, catalyzes the reversible oxidation of malate to oxaloacetate. The polypeptide is Malate dehydrogenase 2 (Albidiferax ferrireducens (strain ATCC BAA-621 / DSM 15236 / T118) (Rhodoferax ferrireducens)).